The chain runs to 61 residues: MLPQHSDIEIAWYASIQQEPNGWKTVTTQFYIQEFSEYIAPLQDAVDLEIATEEERSLLEA.

The protein belongs to the tfa family.

Functionally, might play a role in cell growth during glycolysis. The protein is Protein TfaX (tfaX) of Escherichia coli (strain K12).